We begin with the raw amino-acid sequence, 95 residues long: Protein TusB (95 aa).

This sequence belongs to the DsrH/TusB family. In terms of assembly, heterohexamer, formed by a dimer of trimers. The hexameric TusBCD complex contains 2 copies each of TusB, TusC and TusD. The TusBCD complex interacts with TusE.

The protein resides in the cytoplasm. In terms of biological role, part of a sulfur-relay system required for 2-thiolation of 5-methylaminomethyl-2-thiouridine (mnm(5)s(2)U) at tRNA wobble positions. The chain is Protein TusB from Yersinia enterocolitica serotype O:8 / biotype 1B (strain NCTC 13174 / 8081).